Here is a 495-residue protein sequence, read N- to C-terminus: Protein YhjJ (495 aa).

A signal peptide spans 1 to 24; that stretch reads MQGTKIRLLAGSLLMLASAGYVQA.

It belongs to the peptidase M16 family.

It localises to the periplasm. This chain is Protein YhjJ (yhjJ), found in Salmonella typhimurium (strain LT2 / SGSC1412 / ATCC 700720).